A 143-amino-acid chain; its full sequence is Large-conductance mechanosensitive channel (143 aa).

Helical transmembrane passes span 10–30 (FAVK…GAFS) and 89–109 (GSFI…FLMV).

It belongs to the MscL family. As to quaternary structure, homopentamer.

The protein localises to the cell inner membrane. Its function is as follows. Channel that opens in response to stretch forces in the membrane lipid bilayer. May participate in the regulation of osmotic pressure changes within the cell. The chain is Large-conductance mechanosensitive channel from Burkholderia cenocepacia (strain ATCC BAA-245 / DSM 16553 / LMG 16656 / NCTC 13227 / J2315 / CF5610) (Burkholderia cepacia (strain J2315)).